Here is a 188-residue protein sequence, read N- to C-terminus: Threonylcarbamoyl-AMP synthase (188 aa).

The region spanning 3–188 is the YrdC-like domain; the sequence is QLHPSDIKDI…RSGKILRNGQ (186 aa).

Belongs to the SUA5 family. TsaC subfamily.

The protein localises to the cytoplasm. It carries out the reaction L-threonine + hydrogencarbonate + ATP = L-threonylcarbamoyladenylate + diphosphate + H2O. Functionally, required for the formation of a threonylcarbamoyl group on adenosine at position 37 (t(6)A37) in tRNAs that read codons beginning with adenine. Catalyzes the conversion of L-threonine, HCO(3)(-)/CO(2) and ATP to give threonylcarbamoyl-AMP (TC-AMP) as the acyladenylate intermediate, with the release of diphosphate. This is Threonylcarbamoyl-AMP synthase from Shewanella putrefaciens (strain CN-32 / ATCC BAA-453).